We begin with the raw amino-acid sequence, 479 residues long: Glycogen synthase (479 aa).

Position 15 (Lys-15) interacts with ADP-alpha-D-glucose.

This sequence belongs to the glycosyltransferase 1 family. Bacterial/plant glycogen synthase subfamily.

It carries out the reaction [(1-&gt;4)-alpha-D-glucosyl](n) + ADP-alpha-D-glucose = [(1-&gt;4)-alpha-D-glucosyl](n+1) + ADP + H(+). It functions in the pathway glycan biosynthesis; glycogen biosynthesis. Synthesizes alpha-1,4-glucan chains using ADP-glucose. The protein is Glycogen synthase of Pectobacterium carotovorum subsp. carotovorum (strain PC1).